Reading from the N-terminus, the 754-residue chain is 5-methyltetrahydropteroyltriglutamate--homocysteine methyltransferase (754 aa).

5-methyltetrahydropteroyltri-L-glutamate-binding positions include 17 to 20 (RELK) and K117. L-homocysteine is bound by residues 431 to 433 (IGS) and E484. L-methionine-binding positions include 431–433 (IGS) and E484. 5-methyltetrahydropteroyltri-L-glutamate-binding positions include 515-516 (RC) and W561. L-homocysteine is bound at residue D599. D599 is an L-methionine binding site. A 5-methyltetrahydropteroyltri-L-glutamate-binding site is contributed by E605. 3 residues coordinate Zn(2+): H641, C643, and E665. H694 serves as the catalytic Proton donor. C726 serves as a coordination point for Zn(2+).

Belongs to the vitamin-B12 independent methionine synthase family. It depends on Zn(2+) as a cofactor.

It catalyses the reaction 5-methyltetrahydropteroyltri-L-glutamate + L-homocysteine = tetrahydropteroyltri-L-glutamate + L-methionine. It participates in amino-acid biosynthesis; L-methionine biosynthesis via de novo pathway; L-methionine from L-homocysteine (MetE route): step 1/1. Functionally, catalyzes the transfer of a methyl group from 5-methyltetrahydrofolate to homocysteine resulting in methionine formation. In Salmonella typhimurium (strain LT2 / SGSC1412 / ATCC 700720), this protein is 5-methyltetrahydropteroyltriglutamate--homocysteine methyltransferase.